The chain runs to 340 residues: Cobalt-precorrin-5B C(1)-methyltransferase (340 aa).

Belongs to the CbiD family.

The enzyme catalyses Co-precorrin-5B + S-adenosyl-L-methionine = Co-precorrin-6A + S-adenosyl-L-homocysteine. The protein operates within cofactor biosynthesis; adenosylcobalamin biosynthesis; cob(II)yrinate a,c-diamide from sirohydrochlorin (anaerobic route): step 6/10. Its function is as follows. Catalyzes the methylation of C-1 in cobalt-precorrin-5B to form cobalt-precorrin-6A. The sequence is that of Cobalt-precorrin-5B C(1)-methyltransferase from Pyrobaculum aerophilum (strain ATCC 51768 / DSM 7523 / JCM 9630 / CIP 104966 / NBRC 100827 / IM2).